A 355-amino-acid polypeptide reads, in one-letter code: Protein RecA (355 aa).

An ATP-binding site is contributed by 67 to 74; sequence GPESSGKT.

The protein belongs to the RecA family.

Its subcellular location is the cytoplasm. In terms of biological role, can catalyze the hydrolysis of ATP in the presence of single-stranded DNA, the ATP-dependent uptake of single-stranded DNA by duplex DNA, and the ATP-dependent hybridization of homologous single-stranded DNAs. It interacts with LexA causing its activation and leading to its autocatalytic cleavage. In Shewanella amazonensis (strain ATCC BAA-1098 / SB2B), this protein is Protein RecA.